Reading from the N-terminus, the 711-residue chain is Ribosomal RNA large subunit methyltransferase K/L (711 aa).

The THUMP domain maps to 43–154 (TLYRTLLWSR…RENLVISLDL (112 aa)).

Belongs to the methyltransferase superfamily. RlmKL family.

The protein resides in the cytoplasm. It carries out the reaction guanosine(2445) in 23S rRNA + S-adenosyl-L-methionine = N(2)-methylguanosine(2445) in 23S rRNA + S-adenosyl-L-homocysteine + H(+). It catalyses the reaction guanosine(2069) in 23S rRNA + S-adenosyl-L-methionine = N(2)-methylguanosine(2069) in 23S rRNA + S-adenosyl-L-homocysteine + H(+). In terms of biological role, specifically methylates the guanine in position 2445 (m2G2445) and the guanine in position 2069 (m7G2069) of 23S rRNA. The protein is Ribosomal RNA large subunit methyltransferase K/L of Haemophilus influenzae (strain PittGG).